The chain runs to 220 residues: MTQDELKQQVAIAAIEYVVPDTFIGVGTGSTANFFIDELAKIKGKIKGAVASSEATAERLKDHGIPVMELNSVDELSVYIDGADEADPKLNLIKGGGGALTREKIVLAVAKQFVCIADDSKKVAVLGKFPLPIEVIPMARSYVAREVVKRFGGEPVLREGFTTDNGNVILDIHGLEITDPVAMETELNGIVGVVTNGLFAARNADIFLCGTANGVETIKA.

Residues 28–31, 81–84, and 94–97 contribute to the substrate site; these read TGST, DGAD, and KGGG. Glu103 acts as the Proton acceptor in catalysis. Lys121 contributes to the substrate binding site.

It belongs to the ribose 5-phosphate isomerase family. Homodimer.

It catalyses the reaction aldehydo-D-ribose 5-phosphate = D-ribulose 5-phosphate. Its pathway is carbohydrate degradation; pentose phosphate pathway; D-ribose 5-phosphate from D-ribulose 5-phosphate (non-oxidative stage): step 1/1. In terms of biological role, catalyzes the reversible conversion of ribose-5-phosphate to ribulose 5-phosphate. The protein is Ribose-5-phosphate isomerase A of Hydrogenovibrio crunogenus (strain DSM 25203 / XCL-2) (Thiomicrospira crunogena).